A 421-amino-acid chain; its full sequence is Hydrolyase poxO (421 aa).

Catalysis depends on Ser239, which acts as the Nucleophile.

It belongs to the AB hydrolase superfamily. FUS2 hydrolase family. As to quaternary structure, homodimer.

It participates in secondary metabolite biosynthesis. In terms of biological role, hydrolyase; part of the gene cluster that mediates the biosynthesis of oxaleimides, cytotoxic compounds containing an unusual disubstituted succinimide moiety. The first step of the pathway is provided by the HR-PKS poxF that serves in a new mode of collaborative biosynthesis with the PKS-NRPS poxE, by providing the olefin containing amino acid substrate via the synthesis of an ACP-bound dec-4-enoate. The cytochrome P450 monooxygenase poxM-catalyzed oxidation at the alpha-position creates the enzyme-bound 2-hydroxydec-4-enoyl-ACP thioester, which may be prone to spontaneous hydrolysis to yield 2-hydroxydec-4-enoic acid due to increased electrophilicity of the carbonyl. 2-hydroxydec-4-enoic acid can then be further oxidized by poxM to yield the alpha-ketoacid 2-oxodec-4-enoicacid, which is reductively aminated by the aminotransferase poxL to yield (S,E)-2-aminodec-4-enoic acid. The Hybrid PKS-NRPS synthetase poxE then performs condensation between the octaketide product of its PKS modules and the amino group of (S,E)-2-aminodec-4-enoic acid which is activated and incorporated by the adenylation domain. The resulting aminoacyl product can be cyclized by the Diels-Alderase PoxQ and reductively released by the reductive (R) domain of poxE to yield an aldehyde intermediate. The released aldehyde is then substrate for a Knoevenagel condensation by the hydrolyase poxO followed by an oxidation at the 5-position of the pyrrolidone ring. The presence of the olefin from the amino acid building block allows for migration of the substituted allyl group to occur. This allylic transposition reaction takes place in a conjugate addition, semipinacol-like fashion to yield a succinimide intermediate. Iterative two-electron oxidations of the C7 methyl of the succinimide intermediate to the carboxylic acid can be catalyzed by one of two remaining cytochrome P450 monooxygenasess poxC or poxD to yield oxaleimide A. Subsequent oxidation yields the maleimide scaffold oxaleimide I. Both oxaleimide A and oxaleimide I can undergo oxidative modifications in the decalin ring to yield the series of products oxaleimides B to H. In Penicillium oxalicum (strain 114-2 / CGMCC 5302) (Penicillium decumbens), this protein is Hydrolyase poxO.